A 146-amino-acid chain; its full sequence is Large-conductance mechanosensitive channel (146 aa).

2 helical membrane passes run A12–F32 and G83–I103.

The protein belongs to the MscL family. As to quaternary structure, homopentamer.

It is found in the cell inner membrane. Its function is as follows. Channel that opens in response to stretch forces in the membrane lipid bilayer. May participate in the regulation of osmotic pressure changes within the cell. The protein is Large-conductance mechanosensitive channel of Phocaeicola vulgatus (strain ATCC 8482 / DSM 1447 / JCM 5826 / CCUG 4940 / NBRC 14291 / NCTC 11154) (Bacteroides vulgatus).